The sequence spans 517 residues: DNA-(apurinic or apyrimidinic site) endonuclease 2 (517 aa).

2 residues coordinate Mg(2+): Asn9 and Glu34. The short motif at 82–90 is the Claspin-like CKB motif element; that stretch reads EEGLSGVFC. Tyr142 is an active-site residue. Mg(2+)-binding residues include Asp183, Asn185, Asp299, and His300. Asp183 acts as the Proton donor/acceptor in catalysis. The active-site Proton acceptor is the His300. The span at 347–362 shows a compositional bias: polar residues; the sequence is GNTTEESSELTGTPSF. Residues 347–366 are disordered; sequence GNTTEESSELTGTPSFTEGA. The PCNA interacting protein (PIP) box signature appears at 395–402; it reads QGNLLSFF. Cys463, His466, Cys489, and Cys503 together coordinate Zn(2+). Residues 463–512 form a GRF-type zinc finger; that stretch reads CKGHSEPCVLRTVKKAGPNCGRQFYVCARPEGHSSNPQARCNFFLWLTKK.

It belongs to the DNA repair enzymes AP/ExoA family. Interacts (via PIP box and GRF-type Zinc finger domain) with pcna; the interaction is required for 3 -5 SSB end resection, assembly of a checkpoint protein complex to SSB sites, and SSB signaling. Interacts with chek1. Mg(2+) is required as a cofactor. The cofactor is Mn(2+). As to expression, expressed in eggs (at protein level).

Its subcellular location is the nucleus. The protein resides in the chromosome. The protein localises to the cytoplasm. It localises to the mitochondrion. The catalysed reaction is Exonucleolytic cleavage in the 3'- to 5'-direction to yield nucleoside 5'-phosphates.. 3'-5' nuclease activity is stimulated in presence of pcna. Functions as a weak apurinic/apyrimidinic (AP) endodeoxyribonuclease in the DNA base excision repair (BER) pathway of DNA lesions induced by oxidative and alkylating agents. Initiates repair of AP sites in DNA by catalyzing hydrolytic incision of the phosphodiester backbone immediately adjacent to the damage, generating a single-strand break with 5'-deoxyribose phosphate and 3'-hydroxyl ends. Exhibits 3'-5' exonuclease activity on a 3' DNA substrate; nuclease activity is stimulated by interaction with pcna. Has a preference for the 3' recessed ends over blunt-ended substrates, in both the presence and the absence of pcna. Generates single-stranded DNA (ssDNA) via 3'-5' single-strand break (SSB) end resection, thereby promoting a DNA damage response via replication protein A (rpa2)-binding to ssDNA and the recruitment of a checkpoint protein complex, including atr, atr-interacting protein atrip, and rad9, to damage sites following oxidative stress. Plays a role in reversing blocked 3' DNA ends, problematic lesions that preclude DNA synthesis. Required for chek1 phosphorylation induced by hydrogen peroxide but not by stalled replication forks. This Xenopus laevis (African clawed frog) protein is DNA-(apurinic or apyrimidinic site) endonuclease 2.